The primary structure comprises 816 residues: Nicotine 6-hydroxylase large subunit (816 aa).

Residue Glu-745 participates in Mo-molybdopterin cytosine dinucleotide binding.

Belongs to the xanthine dehydrogenase family. In terms of assembly, heterotrimer composed of a large subunit (NdhL), a medium subunit (NdhM) and a small subunit (NdhS). Requires Mo-molybdopterin cytosine dinucleotide as cofactor.

The protein localises to the cytoplasm. It catalyses the reaction (R)-nicotine + A + H2O = (R)-6-hydroxynicotine + AH2. The enzyme catalyses (S)-nicotine + A + H2O = (S)-6-hydroxynicotine + AH2. It functions in the pathway alkaloid degradation; nicotine degradation; 6-hydroxypseudooxynicotine from nicotine (R-isomer route): step 1/2. Its pathway is alkaloid degradation; nicotine degradation; 6-hydroxypseudooxynicotine from nicotine (S-isomer route): step 1/2. Nicotine dehydrogenase activity is inhibited by tungsten. Component of the nicotine 6-hydroxylase, which is involved in the degradation of nicotine. Catalyzes the hydroxylation of the pyridine ring at C6 to form 6-hydroxynicotine. Can use both L-nicotine and D-nicotine. The chain is Nicotine 6-hydroxylase large subunit from Paenarthrobacter nicotinovorans (Arthrobacter nicotinovorans).